A 30-amino-acid chain; its full sequence is Cyclotide mden-I (30 aa).

A cross-link (cyclopeptide (Gly-Asn)) is located at residues 1–30 (GIPCGESCVYIPCITTAIGCSCKNKVCYRN). 3 disulfide bridges follow: cysteine 4-cysteine 20, cysteine 8-cysteine 22, and cysteine 13-cysteine 27.

This sequence belongs to the cyclotide family. Bracelet subfamily. In terms of processing, this is a cyclic peptide.

In terms of biological role, probably participates in a plant defense mechanism. The chain is Cyclotide mden-I from Melicytus dentatus (Tree violet).